We begin with the raw amino-acid sequence, 72 residues long: UPF0154 protein BLi02038/BL02936 (72 aa).

Residues tryptophan 4–isoleucine 24 traverse the membrane as a helical segment.

This sequence belongs to the UPF0154 family.

The protein resides in the cell membrane. In Bacillus licheniformis (strain ATCC 14580 / DSM 13 / JCM 2505 / CCUG 7422 / NBRC 12200 / NCIMB 9375 / NCTC 10341 / NRRL NRS-1264 / Gibson 46), this protein is UPF0154 protein BLi02038/BL02936.